The sequence spans 382 residues: 1-deoxy-D-xylulose 5-phosphate reductoisomerase (382 aa).

NADPH is bound by residues Thr-10, Gly-11, Ser-12, Ile-13, Gly-36, and Asn-122. 1-deoxy-D-xylulose 5-phosphate is bound at residue Lys-123. Glu-124 provides a ligand contact to NADPH. Asp-148 lines the Mn(2+) pocket. 1-deoxy-D-xylulose 5-phosphate is bound by residues Ser-149, Glu-150, Ser-174, and His-197. Glu-150 provides a ligand contact to Mn(2+). Position 203 (Gly-203) interacts with NADPH. Ser-210, Asn-215, Lys-216, and Glu-219 together coordinate 1-deoxy-D-xylulose 5-phosphate. Glu-219 provides a ligand contact to Mn(2+).

It belongs to the DXR family. It depends on Mg(2+) as a cofactor. Mn(2+) is required as a cofactor.

The enzyme catalyses 2-C-methyl-D-erythritol 4-phosphate + NADP(+) = 1-deoxy-D-xylulose 5-phosphate + NADPH + H(+). It functions in the pathway isoprenoid biosynthesis; isopentenyl diphosphate biosynthesis via DXP pathway; isopentenyl diphosphate from 1-deoxy-D-xylulose 5-phosphate: step 1/6. Functionally, catalyzes the NADPH-dependent rearrangement and reduction of 1-deoxy-D-xylulose-5-phosphate (DXP) to 2-C-methyl-D-erythritol 4-phosphate (MEP). The protein is 1-deoxy-D-xylulose 5-phosphate reductoisomerase of Prosthecochloris aestuarii (strain DSM 271 / SK 413).